We begin with the raw amino-acid sequence, 599 residues long: Sulfite reductase [NADPH] flavoprotein alpha-component (599 aa).

Positions 64–202 constitute a Flavodoxin-like domain; it reads ITIISASQTG…AASEWRARVV (139 aa). Residues 70 to 75, 117 to 120, and 153 to 162 each bind FMN; these read SQTGNA, STQG, and LGDSSYEFFC. An FAD-binding FR-type domain is found at 234–448; sequence DAPLVASLSV…IEHNDNFRLP (215 aa). Residues T322, A356, 386–389, 404–406, Y410, and 419–422 contribute to the FAD site; these read RLYS, TVG, and GGAS. Residues 519-520, 525-529, and D561 each bind NADP(+); these read SR and KVYVQ. Y599 provides a ligand contact to FAD.

This sequence belongs to the NADPH-dependent sulphite reductase flavoprotein subunit CysJ family. In the N-terminal section; belongs to the flavodoxin family. It in the C-terminal section; belongs to the flavoprotein pyridine nucleotide cytochrome reductase family. In terms of assembly, alpha(8)-beta(8). The alpha component is a flavoprotein, the beta component is a hemoprotein. It depends on FAD as a cofactor. FMN serves as cofactor.

The enzyme catalyses hydrogen sulfide + 3 NADP(+) + 3 H2O = sulfite + 3 NADPH + 4 H(+). It participates in sulfur metabolism; hydrogen sulfide biosynthesis; hydrogen sulfide from sulfite (NADPH route): step 1/1. Its function is as follows. Component of the sulfite reductase complex that catalyzes the 6-electron reduction of sulfite to sulfide. This is one of several activities required for the biosynthesis of L-cysteine from sulfate. The flavoprotein component catalyzes the electron flow from NADPH -&gt; FAD -&gt; FMN to the hemoprotein component. This Escherichia coli (strain ATCC 8739 / DSM 1576 / NBRC 3972 / NCIMB 8545 / WDCM 00012 / Crooks) protein is Sulfite reductase [NADPH] flavoprotein alpha-component.